We begin with the raw amino-acid sequence, 88 residues long: YcgL domain-containing protein NTHI1684 (88 aa).

Positions 1-85 (MLCAIYKSKK…QDDGLFNSLS (85 aa)) constitute a YcgL domain.

This Haemophilus influenzae (strain 86-028NP) protein is YcgL domain-containing protein NTHI1684.